Reading from the N-terminus, the 516-residue chain is Acyl-lipid (7-3)-desaturase, chloroplastic (516 aa).

The segment at 1 to 25 (MNATMQRSAVAGRTSGKVATTARAS) is disordered. The transit peptide at 1 to 47 (MNATMQRSAVAGRTSGKVATTARASSMARPRLPIAGRVARRSAVTVR) directs the protein to the chloroplast. The Cytochrome b5 heme-binding domain maps to 83-148 (WTVYRGVAYD…LADFPVDAVP (66 aa)). Residues H100 and H123 each contribute to the heme site. Helical transmembrane passes span 186–206 (GAAF…TYDA) and 209–229 (LTGA…QHCG). The Histidine box-1 signature appears at 227–231 (HCGNH). The Histidine box-2 signature appears at 262 to 267 (HQVSHH). A run of 4 helical transmembrane segments spans residues 305–325 (MWAL…QALL), 354–374 (FLLY…GGAA), 375–395 (GYLF…HNVP), and 423–443 (VLTS…GLNL). Positions 444 to 448 (QIEHH) match the Histidine box-3 motif.

It belongs to the fatty acid desaturase type 1 family. Fe(2+) serves as cofactor.

The protein localises to the plastid. It is found in the chloroplast membrane. The catalysed reaction is a (7Z,10Z,13Z,16Z,19Z)-docosapentaenoyl-containing glycerolipid + 2 Fe(II)-[cytochrome b5] + O2 + 2 H(+) = a (4Z,7Z,10Z,13Z,16Z,19Z)-docosahexaenoyl-containing glycerolipid + 2 Fe(III)-[cytochrome b5] + 2 H2O. It carries out the reaction a (7Z,10Z,13Z,16Z)-docosatetraenoyl-containing glycerolipid + 2 Fe(II)-[cytochrome b5] + O2 + 2 H(+) = a (4Z,7Z,10Z,13Z,16Z)-docosapentaenoyl-containing glycerolipid + 2 Fe(III)-[cytochrome b5] + 2 H2O. Functionally, fatty acid desaturase that introduces a cis double bond at the 4-position in 16-carbon polyunsaturated fatty acids that contain a Delta(7) double bond, resulting in the production of 16 carbon fatty acid (7Z,10Z,13Z)-hexadeca-7,10,13-trienoate. The chain is Acyl-lipid (7-3)-desaturase, chloroplastic from Chlamydomonas reinhardtii (Chlamydomonas smithii).